Reading from the N-terminus, the 918-residue chain is Non-lysosomal glucosylceramidase (918 aa).

The interval 886 to 918 (HKKSRRPSVTQGTGLSTQPECGPKRSLANLNSE) is disordered. Residues 892 to 904 (PSVTQGTGLSTQP) are compositionally biased toward polar residues. A Phosphoserine modification is found at S893.

Belongs to the non-lysosomal glucosylceramidase family. As to expression, widely expressed at low level. Highly expressed in testis and brain. Ubiquitously expressed in the brain (at protein level). Expressed by Sertoli cells (at protein level).

It localises to the endoplasmic reticulum membrane. Its subcellular location is the golgi apparatus membrane. It catalyses the reaction a beta-D-glucosyl-(1&lt;-&gt;1')-N-acylsphing-4-enine + H2O = an N-acylsphing-4-enine + D-glucose. The enzyme catalyses a beta-D-galactosyl-(1&lt;-&gt;1')-N-acylsphing-4-enine + H2O = an N-acylsphing-4-enine + D-galactose. It carries out the reaction beta-D-glucosyl-(1-&gt;3)-O-lithocholate + H2O = lithocholate + D-glucose. The catalysed reaction is beta-D-glucosyl-(1-&gt;3)-O-chenodeoxycholate + H2O = chenodeoxycholate + D-glucose. It catalyses the reaction a di-trans,poly-cis-dolichyl beta-D-glucosyl phosphate + chenodeoxycholate = beta-D-glucosyl-(1-&gt;3)-O-chenodeoxycholate + a di-trans,poly-cis-dolichyl phosphate + H(+). The enzyme catalyses octyl beta-D-glucose + chenodeoxycholate = beta-D-glucosyl-(1-&gt;3)-O-chenodeoxycholate + octan-1-ol. It carries out the reaction cholesteryl 3-beta-D-glucoside + H2O = cholesterol + D-glucose. The catalysed reaction is a beta-D-glucosyl-(1&lt;-&gt;1')-N-acylsphing-4-enine + cholesterol = cholesteryl 3-beta-D-glucoside + an N-acylsphing-4-enine. It catalyses the reaction beta-D-glucosyl-N-(9Z-octadecenoyl)-sphing-4E-enine + cholesterol = N-(9Z-octadecenoyl)-sphing-4-enine + cholesteryl 3-beta-D-glucoside. The enzyme catalyses a beta-D-galactosyl-(1&lt;-&gt;1')-N-acylsphing-4-enine + cholesterol = cholesteryl 3-beta-D-galactoside + an N-acylsphing-4-enine. It carries out the reaction 1-(beta-D-galactosyl)-N-dodecanoylsphing-4-enine + cholesterol = cholesteryl 3-beta-D-galactoside + N-dodecanoylsphing-4-enine. Its pathway is lipid metabolism; sphingolipid metabolism. It functions in the pathway steroid metabolism; cholesterol metabolism. With respect to regulation, enzymatic activity is dependent on membrane association and requires the presence of lipids. Inhibited by N-(adamantanemethyloxypentyl)-deoxynojirimycin/AMP-DNM. Inhibited by its product sphingosine/N-acylsphing-4-enine in a feedback loop. Also inhibited by other non-acetylated sphingoid bases and their derivatives but not by sphingosine-1-phosphate and complex sphingolipids. Non-lysosomal glucosylceramidase that catalyzes the hydrolysis of glucosylceramides/GlcCers (such as beta-D-glucosyl-(1&lt;-&gt;1')-N-acylsphing-4-enine) to free glucose and ceramides (such as N-acylsphing-4-enine). GlcCers are membrane glycosphingolipids that have a wide intracellular distribution. They are the main precursors of more complex glycosphingolipids that play a role in cellular growth, differentiation, adhesion, signaling, cytoskeletal dynamics and membrane properties. Also involved in the transglucosylation of cholesterol, transferring glucose from GlcCer, thereby modifying its water solubility and biological properties. Under specific conditions, may catalyze the reverse reaction, transferring glucose from cholesteryl-3-beta-D-glucoside to ceramide (such as N-acylsphing-4-enine). May play a role in the metabolism of bile acids. Able to hydrolyze bile acid 3-O-glucosides as well as to produce bile acid-glucose conjugates thanks to a bile acid glucosyl transferase activity. Catalyzes the hydrolysis of galactosylceramides/GalCers (such as beta-D-galactosyl-(1&lt;-&gt;1')-N-acylsphing-4-enine), as well as galactosyl transfer between GalCers and cholesterol in vitro with lower activity compared with their activity against GlcCers. The chain is Non-lysosomal glucosylceramidase from Mus musculus (Mouse).